The sequence spans 279 residues: Pantothenate synthetase (279 aa).

27 to 34 (MGYLHEGH) provides a ligand contact to ATP. His34 functions as the Proton donor in the catalytic mechanism. Gln58 contacts (R)-pantoate. Gln58 serves as a coordination point for beta-alanine. 144-147 (GKKD) contributes to the ATP binding site. Gln150 is a binding site for (R)-pantoate. Residues Val173 and 181-184 (MSSR) each bind ATP.

The protein belongs to the pantothenate synthetase family. Homodimer.

It localises to the cytoplasm. It carries out the reaction (R)-pantoate + beta-alanine + ATP = (R)-pantothenate + AMP + diphosphate + H(+). Its pathway is cofactor biosynthesis; (R)-pantothenate biosynthesis; (R)-pantothenate from (R)-pantoate and beta-alanine: step 1/1. Functionally, catalyzes the condensation of pantoate with beta-alanine in an ATP-dependent reaction via a pantoyl-adenylate intermediate. The polypeptide is Pantothenate synthetase (Citrifermentans bemidjiense (strain ATCC BAA-1014 / DSM 16622 / JCM 12645 / Bem) (Geobacter bemidjiensis)).